Here is a 342-residue protein sequence, read N- to C-terminus: RNA 3'-terminal phosphate cyclase (342 aa).

Residues Gln-103 and 283 to 287 (YLADQ) contribute to the ATP site. His-308 serves as the catalytic Tele-AMP-histidine intermediate.

The protein belongs to the RNA 3'-terminal cyclase family. Type 1 subfamily.

The protein localises to the cytoplasm. The enzyme catalyses a 3'-end 3'-phospho-ribonucleotide-RNA + ATP = a 3'-end 2',3'-cyclophospho-ribonucleotide-RNA + AMP + diphosphate. Its function is as follows. Catalyzes the conversion of 3'-phosphate to a 2',3'-cyclic phosphodiester at the end of RNA. The mechanism of action of the enzyme occurs in 3 steps: (A) adenylation of the enzyme by ATP; (B) transfer of adenylate to an RNA-N3'P to produce RNA-N3'PP5'A; (C) and attack of the adjacent 2'-hydroxyl on the 3'-phosphorus in the diester linkage to produce the cyclic end product. The biological role of this enzyme is unknown but it is likely to function in some aspects of cellular RNA processing. The chain is RNA 3'-terminal phosphate cyclase (rtcA) from Escherichia coli O157:H7.